Reading from the N-terminus, the 836-residue chain is MPINYTNLLLMLRECKNFRCLLQVHGSLIVSGLKPHNQLINAYSLFQRQDLSRVIFDSVRDPGVVLWNSMIRGYTRAGLHREALGFFGYMSEEKGIDPDKYSFTFALKACAGSMDFKKGLRIHDLIAEMGLESDVYIGTALVEMYCKARDLVSARQVFDKMHVKDVVTWNTMVSGLAQNGCSSAALLLFHDMRSCCVDIDHVSLYNLIPAVSKLEKSDVCRCLHGLVIKKGFIFAFSSGLIDMYCNCADLYAAESVFEEVWRKDESSWGTMMAAYAHNGFFEEVLELFDLMRNYDVRMNKVAAASALQAAAYVGDLVKGIAIHDYAVQQGLIGDVSVATSLMSMYSKCGELEIAEQLFINIEDRDVVSWSAMIASYEQAGQHDEAISLFRDMMRIHIKPNAVTLTSVLQGCAGVAASRLGKSIHCYAIKADIESELETATAVISMYAKCGRFSPALKAFERLPIKDAVAFNALAQGYTQIGDANKAFDVYKNMKLHGVCPDSRTMVGMLQTCAFCSDYARGSCVYGQIIKHGFDSECHVAHALINMFTKCDALAAAIVLFDKCGFEKSTVSWNIMMNGYLLHGQAEEAVATFRQMKVEKFQPNAVTFVNIVRAAAELSALRVGMSVHSSLIQCGFCSQTPVGNSLVDMYAKCGMIESSEKCFIEISNKYIVSWNTMLSAYAAHGLASCAVSLFLSMQENELKPDSVSFLSVLSACRHAGLVEEGKRIFEEMGERHKIEAEVEHYACMVDLLGKAGLFGEAVEMMRRMRVKTSVGVWGALLNSSRMHCNLWLSNAALCQLVKLEPLNPSHYSQDRRLGEVNNVSRIKKVPACSWIEV.

PPR repeat units follow at residues 1–35 (MPIN…GLKP), 36–62 (HNQL…VRDP), 63–98 (GVVL…GIDP), 99–133 (DKYS…GLES), 134–164 (DVYI…MHVK), 165–199 (DVVT…CVDI), 200–230 (DHVS…VIKK), 233–263 (IFAF…VWRK), 264–298 (DESS…DVRM), 299–333 (NKVA…GLIG), 334–364 (DVSV…IEDR), 365–399 (DVVS…HIKP), 400–434 (NAVT…DIES), 435–465 (ELET…LPIK), 466–500 (DAVA…GVCP), 501–535 (DSRT…GFDS), 536–566 (ECHV…CGFE), 568–602 (STVS…KFQP), 603–637 (NAVT…GFCS), 638–668 (QTPV…ISNK), 669–703 (YIVS…ELKP), 704–734 (DSVS…MGER), and 740–770 (EVEH…MRVK). The segment at 775–836 (VWGALLNSSR…KVPACSWIEV (62 aa)) is type E motif; degenerate.

This sequence belongs to the PPR family. PCMP-E subfamily.

The chain is Pentatricopeptide repeat-containing protein At2g39620 (PCMP-E33) from Arabidopsis thaliana (Mouse-ear cress).